We begin with the raw amino-acid sequence, 84 residues long: RNA-binding protein Hfq (84 aa).

A Sm domain is found at 10–70; sequence DNVLNQVRKN…VSTIIPGKTL (61 aa).

Belongs to the Hfq family. Homohexamer.

RNA chaperone that binds small regulatory RNA (sRNAs) and mRNAs to facilitate mRNA translational regulation in response to envelope stress, environmental stress and changes in metabolite concentrations. Also binds with high specificity to tRNAs. This chain is RNA-binding protein Hfq, found in Natranaerobius thermophilus (strain ATCC BAA-1301 / DSM 18059 / JW/NM-WN-LF).